The following is a 205-amino-acid chain: ATP phosphoribosyltransferase (205 aa).

The protein belongs to the ATP phosphoribosyltransferase family. Short subfamily. As to quaternary structure, heteromultimer composed of HisG and HisZ subunits.

It is found in the cytoplasm. It carries out the reaction 1-(5-phospho-beta-D-ribosyl)-ATP + diphosphate = 5-phospho-alpha-D-ribose 1-diphosphate + ATP. It functions in the pathway amino-acid biosynthesis; L-histidine biosynthesis; L-histidine from 5-phospho-alpha-D-ribose 1-diphosphate: step 1/9. Catalyzes the condensation of ATP and 5-phosphoribose 1-diphosphate to form N'-(5'-phosphoribosyl)-ATP (PR-ATP). Has a crucial role in the pathway because the rate of histidine biosynthesis seems to be controlled primarily by regulation of HisG enzymatic activity. The protein is ATP phosphoribosyltransferase of Staphylococcus carnosus (strain TM300).